The primary structure comprises 197 residues: Fucoxanthin-chlorophyll a-c binding protein E, chloroplastic (197 aa).

Residues 1–31 constitute a chloroplast transit peptide; sequence MKFVVFASLLASAARFAPAQQSARTSVATNM. The next 3 helical transmembrane spans lie at 73–94, 114–134, and 174–196; these read ISMLAVAGYLVQENGIRLPGDI, ISGAGIAQIVAFIGFLELAVM, and GRAAQMGILALMVHEQLGVSLIP.

This sequence belongs to the fucoxanthin chlorophyll protein family. As to quaternary structure, the LHC complex of chromophytic algae is composed of fucoxanthin, chlorophyll A and C bound non-covalently by fucoxanthin chlorophyll proteins (FCPs). The ratio of the pigments in LHC; fucoxanthin: chlorophyll C: chlorophyll A; (0.6-1): (0.1-0.3): (1).

The protein localises to the plastid. Its subcellular location is the chloroplast thylakoid membrane. Its function is as follows. The light-harvesting complex (LHC) functions as a light receptor, it captures and delivers excitation energy to photosystems with which it is closely associated. Energy is transferred from the carotenoid and chlorophyll C (or B) to chlorophyll A and the photosynthetic reaction centers where it is used to synthesize ATP and reducing power. The chain is Fucoxanthin-chlorophyll a-c binding protein E, chloroplastic (FCPE) from Phaeodactylum tricornutum (Diatom).